We begin with the raw amino-acid sequence, 114 residues long: MPIFTLNTNIKATDVPSDFLSSTSALVGNILSKPGSYVAVHINTDQQLSFGGSTKPAAFGTLMSIGGIEPSRNRDHSAKLFDHLNKKLGIPKNRMYIHFVNLNGDDVGWNGTTF.

Catalysis depends on Pro-2, which acts as the Proton acceptor; via imino nitrogen. Residues Lys-33 and Ile-65 each contribute to the substrate site.

This sequence belongs to the MIF family.

It localises to the secreted. The enzyme catalyses L-dopachrome = 5,6-dihydroxyindole-2-carboxylate. It carries out the reaction 3-phenylpyruvate = enol-phenylpyruvate. Tautomerization of the methyl ester of L-dopachrome. Inhibits migration of human peripheral blood mononuclear cells. This Trichinella spiralis (Trichina worm) protein is Macrophage migration inhibitory factor homolog.